Consider the following 344-residue polypeptide: S-adenosylmethionine:tRNA ribosyltransferase-isomerase (344 aa).

The protein belongs to the QueA family. As to quaternary structure, monomer.

The protein resides in the cytoplasm. It carries out the reaction 7-aminomethyl-7-carbaguanosine(34) in tRNA + S-adenosyl-L-methionine = epoxyqueuosine(34) in tRNA + adenine + L-methionine + 2 H(+). Its pathway is tRNA modification; tRNA-queuosine biosynthesis. In terms of biological role, transfers and isomerizes the ribose moiety from AdoMet to the 7-aminomethyl group of 7-deazaguanine (preQ1-tRNA) to give epoxyqueuosine (oQ-tRNA). This is S-adenosylmethionine:tRNA ribosyltransferase-isomerase from Nitrosococcus oceani (strain ATCC 19707 / BCRC 17464 / JCM 30415 / NCIMB 11848 / C-107).